We begin with the raw amino-acid sequence, 90 residues long: Probable Fe(2+)-trafficking protein (90 aa).

It belongs to the Fe(2+)-trafficking protein family.

Its function is as follows. Could be a mediator in iron transactions between iron acquisition and iron-requiring processes, such as synthesis and/or repair of Fe-S clusters in biosynthetic enzymes. The sequence is that of Probable Fe(2+)-trafficking protein from Xylella fastidiosa (strain 9a5c).